The sequence spans 331 residues: MDAGQPRPEDRHLPVMRDRVVDLLAPAVQAALEAGRTPVAVDGTLGMGGHTEALLTRFPHLRVIGIDRDAHAQAMAAERLGPLADRVIPFHGTYDRVPEAMAAAGVTKVDAALYDLGVSSYQLDDRERGFAYSYDAPLDMRMDDTAERSAATLVAELDEQELRRIIRRDGEERFAGPIARAIVRARAEAPIETTGRLVEVIRSAVPVAAGATGGHPAKRTFQALRIAVNEELDILDAAVPAILDALHVGGRLVVMSYHSLEDRITKRHLSAWATSTAPPGFPVVLEEHEPVVRVLTRGTEKPTEEEISENRRASSAKVRAVEKIRTSRTTA.

S-adenosyl-L-methionine contacts are provided by residues glycine 48 to histidine 50, aspartate 67, aspartate 115, and glutamine 122. The segment at arginine 297 to alanine 331 is disordered. Over residues glycine 298–arginine 312 the composition is skewed to basic and acidic residues.

It belongs to the methyltransferase superfamily. RsmH family.

It localises to the cytoplasm. It carries out the reaction cytidine(1402) in 16S rRNA + S-adenosyl-L-methionine = N(4)-methylcytidine(1402) in 16S rRNA + S-adenosyl-L-homocysteine + H(+). Specifically methylates the N4 position of cytidine in position 1402 (C1402) of 16S rRNA. The protein is Ribosomal RNA small subunit methyltransferase H of Micrococcus luteus (strain ATCC 4698 / DSM 20030 / JCM 1464 / CCM 169 / CCUG 5858 / IAM 1056 / NBRC 3333 / NCIMB 9278 / NCTC 2665 / VKM Ac-2230) (Micrococcus lysodeikticus).